Reading from the N-terminus, the 134-residue chain is DNA-binding protein H-NS homolog (134 aa).

Residues 106-134 are disordered; sequence HKTWTGQGRTPRPIQNALNKGKSLSDFEI. A DNA-binding region spans residues 112 to 117; it reads QGRTPR.

Belongs to the histone-like protein H-NS family. Homodimer that oligomerizes on DNA into higher-order complexes that form bridges between disparate regions of DNA compacting it.

It is found in the cytoplasm. The protein localises to the nucleoid. Its function is as follows. A DNA-binding protein implicated in transcriptional repression and chromosome organization and compaction. Binds nucleation sites in AT-rich DNA and bridges them, forming higher-order nucleoprotein complexes and condensing the chromosome. As many horizontally transferred genes are AT-rich, it plays a central role in silencing foreign genes. A subset of genes are repressed by H-NS in association with other proteins. The polypeptide is DNA-binding protein H-NS homolog (hns) (Haemophilus influenzae (strain ATCC 51907 / DSM 11121 / KW20 / Rd)).